Reading from the N-terminus, the 319-residue chain is Ninja-family protein Os07g0602900 (319 aa).

3 disordered regions span residues 1-26 (MAASRDFLGGFGGEVGGAAVAGEKGG), 69-152 (LPGG…DAMY), and 181-234 (AEAM…LTMR). Positions 70 to 79 (PGGGGGGAGG) are enriched in gly residues. Over residues 105–118 (ERWRRREMQSLKRL) the composition is skewed to basic and acidic residues. The segment covering 185–196 (DTSSSDNASCQN) has biased composition (polar residues). Residues 225–234 (LRTLRSLTMR) are compositionally biased toward low complexity.

It belongs to the Ninja family.

The protein resides in the nucleus. The protein is Ninja-family protein Os07g0602900 of Oryza sativa subsp. japonica (Rice).